A 443-amino-acid chain; its full sequence is Thymidine phosphorylase (443 aa).

It belongs to the thymidine/pyrimidine-nucleoside phosphorylase family. Homodimer.

It carries out the reaction thymidine + phosphate = 2-deoxy-alpha-D-ribose 1-phosphate + thymine. It participates in pyrimidine metabolism; dTMP biosynthesis via salvage pathway; dTMP from thymine: step 1/2. In terms of biological role, the enzymes which catalyze the reversible phosphorolysis of pyrimidine nucleosides are involved in the degradation of these compounds and in their utilization as carbon and energy sources, or in the rescue of pyrimidine bases for nucleotide synthesis. This Aliivibrio fischeri (strain ATCC 700601 / ES114) (Vibrio fischeri) protein is Thymidine phosphorylase.